The chain runs to 203 residues: Somatotropin (203 aa).

The N-terminal stretch at 1–17 (MDRVVLMLSVLSLGVSS) is a signal peptide. Gln-18 carries the pyrrolidone carboxylic acid modification. His-36 contributes to the Zn(2+) binding site. The cysteines at positions 68 and 176 are disulfide-linked. Glu-185 serves as a coordination point for Zn(2+). Residues Cys-193 and Cys-201 are joined by a disulfide bond.

This sequence belongs to the somatotropin/prolactin family.

Its subcellular location is the secreted. Growth hormone plays an important role in growth control and is involved in the regulation of several anabolic processes. Implicated as an osmoregulatory substance important for seawater adaptation. The chain is Somatotropin (gh) from Pagrus major (Red sea bream).